The chain runs to 119 residues: Basic phospholipase A2 (119 aa).

7 disulfide bridges follow: cysteine 11/cysteine 72, cysteine 27/cysteine 118, cysteine 29/cysteine 45, cysteine 44/cysteine 100, cysteine 51/cysteine 93, cysteine 61/cysteine 86, and cysteine 79/cysteine 91. Residues tyrosine 28, glycine 30, and glycine 32 each coordinate Ca(2+). The active site involves histidine 48. Position 49 (aspartate 49) interacts with Ca(2+). An N-linked (GlcNAc...) asparagine glycan is attached at asparagine 82. Aspartate 94 is a catalytic residue.

Belongs to the phospholipase A2 family. Group I subfamily. D49 sub-subfamily. Requires Ca(2+) as cofactor. In terms of tissue distribution, expressed by the venom gland.

Its subcellular location is the secreted. The enzyme catalyses a 1,2-diacyl-sn-glycero-3-phosphocholine + H2O = a 1-acyl-sn-glycero-3-phosphocholine + a fatty acid + H(+). Snake venom phospholipase A2 (PLA2) that shows weak myotoxicity and induces edema in mice. Shows no cytotoxicity in vitro. Has an anticoagulant effect in vitro. PLA2 catalyzes the calcium-dependent hydrolysis of the 2-acyl groups in 3-sn-phosphoglycerides. The polypeptide is Basic phospholipase A2 (Micrurus mipartitus (Red-tailed coral snake)).